The chain runs to 209 residues: Putative cardiolipin synthase (209 aa).

The next 4 membrane-spanning stretches (helical) occupy residues 27 to 47 (AFVYVVLSAHANGWGVAILVF), 82 to 102 (VTVPIVFGLSGIVPWWFVLTL), 126 to 146 (VTYVGKAATFGFMVGFPTILL), and 157 to 177 (LLACGWAFLIWGMYAYLWAFV).

The protein belongs to the CDP-alcohol phosphatidyltransferase class-I family.

Its subcellular location is the cell membrane. It catalyses the reaction a CDP-1,2-diacyl-sn-glycerol + a 1,2-diacyl-sn-glycero-3-phospho-(1'-sn-glycerol) = a cardiolipin + CMP + H(+). Its pathway is lipid metabolism; phospholipid metabolism. In terms of biological role, may catalyze the biosynthesis of cardiolipin from phosphatidylglycerol (PG) and CDP-diacylglycerol. In Mycobacterium bovis (strain ATCC BAA-935 / AF2122/97), this protein is Putative cardiolipin synthase.